We begin with the raw amino-acid sequence, 1520 residues long: DNA-directed RNA polymerase subunit beta'' (1520 aa).

Zn(2+) is bound by residues Cys220, Cys296, Cys303, and Cys306. 2 stretches are compositionally biased toward basic and acidic residues: residues 645–654 and 664–674; these read TREEEYRTRE and PENKYRTREGE. 2 disordered regions span residues 645–676 and 705–786; these read TREE…GEGE and YRTL…KKEG. 2 stretches are compositionally biased toward acidic residues: residues 730 to 748 and 756 to 779; these read GEYE…SSED and TLEE…PEED.

The protein belongs to the RNA polymerase beta' chain family. RpoC2 subfamily. As to quaternary structure, in plastids the minimal PEP RNA polymerase catalytic core is composed of four subunits: alpha, beta, beta', and beta''. When a (nuclear-encoded) sigma factor is associated with the core the holoenzyme is formed, which can initiate transcription. It depends on Zn(2+) as a cofactor.

It is found in the plastid. The protein localises to the chloroplast. The catalysed reaction is RNA(n) + a ribonucleoside 5'-triphosphate = RNA(n+1) + diphosphate. Functionally, DNA-dependent RNA polymerase catalyzes the transcription of DNA into RNA using the four ribonucleoside triphosphates as substrates. This chain is DNA-directed RNA polymerase subunit beta'', found in Sorghum bicolor (Sorghum).